Reading from the N-terminus, the 262-residue chain is Thiazole synthase (262 aa).

The active-site Schiff-base intermediate with DXP is K96. 1-deoxy-D-xylulose 5-phosphate is bound by residues G157, 184-185 (AG), and 206-207 (NT).

The protein belongs to the ThiG family. In terms of assembly, homotetramer. Forms heterodimers with either ThiH or ThiS.

It localises to the cytoplasm. It catalyses the reaction [ThiS sulfur-carrier protein]-C-terminal-Gly-aminoethanethioate + 2-iminoacetate + 1-deoxy-D-xylulose 5-phosphate = [ThiS sulfur-carrier protein]-C-terminal Gly-Gly + 2-[(2R,5Z)-2-carboxy-4-methylthiazol-5(2H)-ylidene]ethyl phosphate + 2 H2O + H(+). It participates in cofactor biosynthesis; thiamine diphosphate biosynthesis. In terms of biological role, catalyzes the rearrangement of 1-deoxy-D-xylulose 5-phosphate (DXP) to produce the thiazole phosphate moiety of thiamine. Sulfur is provided by the thiocarboxylate moiety of the carrier protein ThiS. In vitro, sulfur can be provided by H(2)S. The chain is Thiazole synthase from Legionella pneumophila (strain Corby).